Reading from the N-terminus, the 760-residue chain is Elongation factor G, mitochondrial (760 aa).

The transit peptide at 1-37 (MIRGMLPRGLRALRPSVSPTVVSSSLHRNFHSSIRRF) directs the protein to the mitochondrion. A tr-type G domain is found at 68–349 (SRLRNIGVSA…AVVDYLPQPN (282 aa)). GTP contacts are provided by residues 77-84 (AHIDSGKT), 148-152 (DTPGH), and 202-205 (NKMD).

The protein belongs to the TRAFAC class translation factor GTPase superfamily. Classic translation factor GTPase family. EF-G/EF-2 subfamily.

The protein resides in the mitochondrion. It participates in protein biosynthesis; polypeptide chain elongation. Functionally, mitochondrial GTPase that catalyzes the GTP-dependent ribosomal translocation step during translation elongation. During this step, the ribosome changes from the pre-translocational (PRE) to the post-translocational (POST) state as the newly formed A-site-bound peptidyl-tRNA and P-site-bound deacylated tRNA move to the P and E sites, respectively. Catalyzes the coordinated movement of the two tRNA molecules, the mRNA and conformational changes in the ribosome. This Meyerozyma guilliermondii (strain ATCC 6260 / CBS 566 / DSM 6381 / JCM 1539 / NBRC 10279 / NRRL Y-324) (Yeast) protein is Elongation factor G, mitochondrial.